Consider the following 344-residue polypeptide: Ribosomal RNA small subunit methyltransferase H 2 (344 aa).

Residues 78–80 (GGH), Asp-98, Phe-131, Asp-145, and Gln-152 contribute to the S-adenosyl-L-methionine site.

This sequence belongs to the methyltransferase superfamily. RsmH family.

The protein resides in the cytoplasm. The enzyme catalyses cytidine(1402) in 16S rRNA + S-adenosyl-L-methionine = N(4)-methylcytidine(1402) in 16S rRNA + S-adenosyl-L-homocysteine + H(+). In terms of biological role, specifically methylates the N4 position of cytidine in position 1402 (C1402) of 16S rRNA. The polypeptide is Ribosomal RNA small subunit methyltransferase H 2 (Acholeplasma laidlawii (strain PG-8A)).